Here is a 69-residue protein sequence, read N- to C-terminus: Cytochrome c oxidase subunit 8A, mitochondrial (69 aa).

The transit peptide at 1 to 25 (MSVLTPLLLRGLTGSARRLPMPCAR) directs the protein to the mitochondrion. The SIFI-degron signature appears at 2–19 (SVLTPLLLRGLTGSARRL). Residues 26-36 (VHSKPPREQLG) are Mitochondrial matrix-facing. Residues 37 to 60 (TMDIAIGLTSCFVCFLLPSGWVLS) traverse the membrane as a helical segment. The Mitochondrial intermembrane segment spans residues 61 to 69 (HLENYKKRE).

It belongs to the cytochrome c oxidase VIII family. Component of the cytochrome c oxidase (complex IV, CIV), a multisubunit enzyme composed of 14 subunits. The complex is composed of a catalytic core of 3 subunits MT-CO1, MT-CO2 and MT-CO3, encoded in the mitochondrial DNA, and 11 supernumerary subunits COX4I, COX5A, COX5B, COX6A, COX6B, COX6C, COX7A, COX7B, COX7C, COX8 and NDUFA4, which are encoded in the nuclear genome. The complex exists as a monomer or a dimer and forms supercomplexes (SCs) in the inner mitochondrial membrane with NADH-ubiquinone oxidoreductase (complex I, CI) and ubiquinol-cytochrome c oxidoreductase (cytochrome b-c1 complex, complex III, CIII), resulting in different assemblies (supercomplex SCI(1)III(2)IV(1) and megacomplex MCI(2)III(2)IV(2)). In terms of processing, in response to mitochondrial stress, the precursor protein is ubiquitinated by the SIFI complex in the cytoplasm before mitochondrial import, leading to its degradation. Within the SIFI complex, UBR4 initiates ubiquitin chain that are further elongated or branched by KCMF1.

The protein localises to the mitochondrion inner membrane. It functions in the pathway energy metabolism; oxidative phosphorylation. Component of the cytochrome c oxidase, the last enzyme in the mitochondrial electron transport chain which drives oxidative phosphorylation. The respiratory chain contains 3 multisubunit complexes succinate dehydrogenase (complex II, CII), ubiquinol-cytochrome c oxidoreductase (cytochrome b-c1 complex, complex III, CIII) and cytochrome c oxidase (complex IV, CIV), that cooperate to transfer electrons derived from NADH and succinate to molecular oxygen, creating an electrochemical gradient over the inner membrane that drives transmembrane transport and the ATP synthase. Cytochrome c oxidase is the component of the respiratory chain that catalyzes the reduction of oxygen to water. Electrons originating from reduced cytochrome c in the intermembrane space (IMS) are transferred via the dinuclear copper A center (CU(A)) of subunit 2 and heme A of subunit 1 to the active site in subunit 1, a binuclear center (BNC) formed by heme A3 and copper B (CU(B)). The BNC reduces molecular oxygen to 2 water molecules using 4 electrons from cytochrome c in the IMS and 4 protons from the mitochondrial matrix. The protein is Cytochrome c oxidase subunit 8A, mitochondrial (COX8A) of Nycticebus coucang (Slow loris).